The primary structure comprises 782 residues: ATP-dependent 6-phosphofructokinase, muscle type (782 aa).

The residue at position 2 (Thr2) is an N-acetylthreonine. Residues 2–390 are N-terminal catalytic PFK domain 1; sequence THEEHHAAKT…NWEVYKLLAH (389 aa). ATP contacts are provided by residues Gly25, 88–89, and 118–121; these read RC and GDGS. Asp119 provides a ligand contact to Mg(2+). Ser133 is modified (phosphoserine). Substrate contacts are provided by residues 164-166, Arg201, 208-210, Glu264, Arg292, and 298-301; these read SID, MGR, and HVQR. Residue Asp166 is the Proton acceptor of the active site. Ser377 is subject to Phosphoserine. The tract at residues 391–403 is interdomain linker; the sequence is IRPPVSKTSATMH. Residues 404-782 form a C-terminal regulatory PFK domain 2 region; it reads TVAVMNVGAP…SRKRSGETSI (379 aa). Beta-D-fructose 2,6-bisphosphate contacts are provided by residues Arg473 and 530–534; that span reads TVSNN. The O-linked (GlcNAc) serine glycan is linked to Ser532. An N6-(2-hydroxyisobutyryl)lysine modification is found at Lys559. Residues Arg568, 575-577, Glu631, Arg657, and 663-666 each bind beta-D-fructose 2,6-bisphosphate; these read MGG and HMQQ. At Ser669 the chain carries Phosphoserine. Arg737 serves as a coordination point for beta-D-fructose 2,6-bisphosphate. The residue at position 777 (Ser777) is a Phosphoserine.

The protein belongs to the phosphofructokinase type A (PFKA) family. ATP-dependent PFK group I subfamily. Eukaryotic two domain clade 'E' sub-subfamily. In terms of assembly, homo- and heterotetramers. Phosphofructokinase (PFK) enzyme functions as a tetramer composed of different combinations of 3 types of subunits, called PFKM (M), PFKL (L) and PFKP (P). The composition of the PFK tetramer differs according to the tissue type it is present in. The kinetic and regulatory properties of the tetrameric enzyme are dependent on the subunit composition, hence can vary across tissues. Interacts (via C-terminus) with HK1 (via N-terminal spermatogenic cell-specific region). It depends on Mg(2+) as a cofactor. In terms of processing, glcNAcylation decreases enzyme activity.

The protein localises to the cytoplasm. It catalyses the reaction beta-D-fructose 6-phosphate + ATP = beta-D-fructose 1,6-bisphosphate + ADP + H(+). Its pathway is carbohydrate degradation; glycolysis; D-glyceraldehyde 3-phosphate and glycerone phosphate from D-glucose: step 3/4. Allosterically activated by ADP, AMP, or fructose 2,6-bisphosphate, and allosterically inhibited by ATP or citrate. Functionally, catalyzes the phosphorylation of D-fructose 6-phosphate to fructose 1,6-bisphosphate by ATP, the first committing step of glycolysis. The sequence is that of ATP-dependent 6-phosphofructokinase, muscle type (PFKM) from Canis lupus familiaris (Dog).